Consider the following 123-residue polypeptide: Small ribosomal subunit protein uS12 (123 aa).

Asp89 carries the 3-methylthioaspartic acid modification.

The protein belongs to the universal ribosomal protein uS12 family. In terms of assembly, part of the 30S ribosomal subunit. Contacts proteins S8 and S17. May interact with IF1 in the 30S initiation complex.

With S4 and S5 plays an important role in translational accuracy. Its function is as follows. Interacts with and stabilizes bases of the 16S rRNA that are involved in tRNA selection in the A site and with the mRNA backbone. Located at the interface of the 30S and 50S subunits, it traverses the body of the 30S subunit contacting proteins on the other side and probably holding the rRNA structure together. The combined cluster of proteins S8, S12 and S17 appears to hold together the shoulder and platform of the 30S subunit. This is Small ribosomal subunit protein uS12 from Anaeromyxobacter sp. (strain Fw109-5).